Reading from the N-terminus, the 275-residue chain is uncharacterized protein (275 aa).

This is an uncharacterized protein from Enterobacteria phage T4 (Bacteriophage T4).